Here is a 195-residue protein sequence, read N- to C-terminus: Large ribosomal subunit protein uL18 (195 aa).

It belongs to the universal ribosomal protein uL18 family. Part of the 50S ribosomal subunit. Contacts the 5S and 23S rRNAs.

In terms of biological role, this is one of the proteins that bind and probably mediate the attachment of the 5S RNA into the large ribosomal subunit, where it forms part of the central protuberance. The sequence is that of Large ribosomal subunit protein uL18 from Metallosphaera sedula (strain ATCC 51363 / DSM 5348 / JCM 9185 / NBRC 15509 / TH2).